The primary structure comprises 341 residues: L-threonine 3-dehydrogenase (341 aa).

Residue Cys38 participates in Zn(2+) binding. Catalysis depends on charge relay system residues Thr40 and His43. His63, Glu64, Cys93, Cys96, Cys99, and Cys107 together coordinate Zn(2+). NAD(+)-binding positions include Ile175, Asp195, Arg200, 262–264 (LGI), and 286–287 (IY).

This sequence belongs to the zinc-containing alcohol dehydrogenase family. Homotetramer. It depends on Zn(2+) as a cofactor.

It localises to the cytoplasm. The enzyme catalyses L-threonine + NAD(+) = (2S)-2-amino-3-oxobutanoate + NADH + H(+). Its pathway is amino-acid degradation; L-threonine degradation via oxydo-reductase pathway; glycine from L-threonine: step 1/2. Catalyzes the NAD(+)-dependent oxidation of L-threonine to 2-amino-3-ketobutyrate. The polypeptide is L-threonine 3-dehydrogenase (Proteus mirabilis (strain HI4320)).